Here is a 62-residue protein sequence, read N- to C-terminus: Metallothionein-4 (62 aa).

The a divalent metal cation site is built by Cys6, Cys8, Cys14, Cys16, Cys20, Cys22, Cys25, Cys27, Cys30, Cys34, Cys35, Cys37, Cys38, Cys42, Cys45, Cys49, Cys51, Cys58, Cys60, and Cys61.

The protein belongs to the metallothionein superfamily. Type 1 family. As to expression, expressed exclusively in stratified squamous epithelia associated with oral epithelia, esophagus, upper stomach, tail, footpads and neonatal skin.

In terms of biological role, seems to bind zinc and copper. Could play a special role in regulating zinc metabolism during the differentiation of stratified epithelia. This is Metallothionein-4 (Mt4) from Mus musculus (Mouse).